The following is a 128-amino-acid chain: Adrenodoxin (128 aa).

Ser3 carries the phosphoserine modification. Position 6 is an N6-acetyllysine; alternate (Lys6). An N6-succinyllysine; alternate modification is found at Lys6. The 2Fe-2S ferredoxin-type domain occupies 7–111 (VTVNFINRDG…NMTVRVPDAV (105 aa)). Positions 46, 52, 55, and 92 each coordinate [2Fe-2S] cluster. Lys98 is modified (N6-succinyllysine). A Phosphoserine modification is found at Ser117.

The protein belongs to the adrenodoxin/putidaredoxin family. Interacts with CYP11A1. Requires [2Fe-2S] cluster as cofactor.

Its subcellular location is the mitochondrion matrix. Functionally, essential for the synthesis of various steroid hormones. Participates in the reduction of mitochondrial cytochrome P450 for steroidogenesis. Transfers electrons from adrenodoxin reductase to CYP11A1, a cytochrome P450 that catalyzes cholesterol side-chain cleavage. Does not form a ternary complex with adrenodoxin reductase and CYP11A1 but shuttles between the two enzymes to transfer electrons. This Ovis aries (Sheep) protein is Adrenodoxin (FDX1).